Reading from the N-terminus, the 202-residue chain is Nascent polypeptide-associated complex subunit alpha (202 aa).

The span at Met-1–Val-19 shows a compositional bias: basic and acidic residues. A disordered region spans residues Met-1 to Val-42. Residues Ser-46–Ala-111 form the NAC-A/B domain. The span at Gln-117 to Glu-126 shows a compositional bias: low complexity. The interval Gln-117 to Ala-165 is disordered. Residues His-127–Glu-149 are compositionally biased toward basic and acidic residues. The segment covering Glu-150–Gly-162 has biased composition (acidic residues). Positions Leu-163–Ile-202 constitute a UBA domain.

The protein belongs to the NAC-alpha family. As to quaternary structure, part of the nascent polypeptide-associated complex (NAC), consisting of egd2 and egd1. NAC associates with ribosomes via egd1.

The protein localises to the cytoplasm. The protein resides in the nucleus. Its function is as follows. Component of the nascent polypeptide-associated complex (NAC), a dynamic component of the ribosomal exit tunnel, protecting the emerging polypeptides from interaction with other cytoplasmic proteins to ensure appropriate nascent protein targeting. The NAC complex also promotes mitochondrial protein import by enhancing productive ribosome interactions with the outer mitochondrial membrane and blocks the inappropriate interaction of ribosomes translating non-secretory nascent polypeptides with translocation sites in the membrane of the endoplasmic reticulum. Egd2 may also be involved in transcription regulation. This is Nascent polypeptide-associated complex subunit alpha (egd2) from Aspergillus niger (strain ATCC MYA-4892 / CBS 513.88 / FGSC A1513).